We begin with the raw amino-acid sequence, 527 residues long: Catalase (527 aa).

A compositionally biased stretch (basic and acidic residues) spans 1-22 (MADSRDPASDQMKHWKEERAAQ). The interval 1 to 32 (MADSRDPASDQMKHWKEERAAQKPDVLTTAGG) is disordered. Residue Ala-2 is modified to N-acetylalanine. Ser-9 carries the post-translational modification Phosphoserine. The residue at position 13 (Lys-13) is an N6-succinyllysine. Catalysis depends on residues His-75 and Asn-148. Positions 194, 201, 203, and 213 each coordinate NADP(+). At Lys-221 the chain carries N6-succinyllysine. Position 233 is an N6-acetyllysine (Lys-233). The NADP(+) site is built by Lys-237, Trp-303, His-305, and Lys-306. N6-acetyllysine; alternate is present on Lys-306. An N6-succinyllysine; alternate modification is found at Lys-306. Tyr-358 provides a ligand contact to heme. At Ser-434 the chain carries Phosphoserine. Lys-480 carries the post-translational modification N6-acetyllysine; alternate. Lys-480 is modified (N6-succinyllysine; alternate). Lys-499 carries the N6-acetyllysine modification. Thr-511 carries the post-translational modification Phosphothreonine. Ser-517 carries the post-translational modification Phosphoserine. Lys-522 carries the post-translational modification N6-succinyllysine. The Microbody targeting signal; atypical motif lies at 524 to 527 (KANL).

The protein belongs to the catalase family. As to quaternary structure, homotetramer. Interacts (via microbody targeting signal) with PEX5, monomeric form interacts with PEX5, leading to its translocation into peroxisomes. It depends on heme as a cofactor. NADP(+) is required as a cofactor.

It localises to the peroxisome matrix. The enzyme catalyses 2 H2O2 = O2 + 2 H2O. Its function is as follows. Catalyzes the degradation of hydrogen peroxide (H(2)O(2)) generated by peroxisomal oxidases to water and oxygen, thereby protecting cells from the toxic effects of hydrogen peroxide. Promotes growth of cells including T-cells, B-cells, myeloid leukemia cells, melanoma cells, mastocytoma cells and normal and transformed fibroblast cells. The polypeptide is Catalase (CAT) (Cavia porcellus (Guinea pig)).